The following is an 827-amino-acid chain: DNA gyrase subunit A (827 aa).

A Topo IIA-type catalytic domain is found at 38–501 (LPDARDGLKP…SYENIDIEDL (464 aa)). Y126 serves as the catalytic O-(5'-phospho-DNA)-tyrosine intermediate. A GyrA-box motif is present at residues 528-534 (QNRGGKG).

Belongs to the type II topoisomerase GyrA/ParC subunit family. Heterotetramer, composed of two GyrA and two GyrB chains. In the heterotetramer, GyrA contains the active site tyrosine that forms a transient covalent intermediate with DNA, while GyrB binds cofactors and catalyzes ATP hydrolysis.

The protein localises to the cytoplasm. It catalyses the reaction ATP-dependent breakage, passage and rejoining of double-stranded DNA.. Functionally, a type II topoisomerase that negatively supercoils closed circular double-stranded (ds) DNA in an ATP-dependent manner to modulate DNA topology and maintain chromosomes in an underwound state. Negative supercoiling favors strand separation, and DNA replication, transcription, recombination and repair, all of which involve strand separation. Also able to catalyze the interconversion of other topological isomers of dsDNA rings, including catenanes and knotted rings. Type II topoisomerases break and join 2 DNA strands simultaneously in an ATP-dependent manner. The protein is DNA gyrase subunit A of Helicobacter pylori (strain ATCC 700392 / 26695) (Campylobacter pylori).